Here is a 469-residue protein sequence, read N- to C-terminus: Adenosylhomocysteinase (469 aa).

Substrate is bound by residues Thr-63, Asp-139, and Glu-164. 165-167 (TTT) is an NAD(+) binding site. Positions 194 and 198 each coordinate substrate. Residues Asn-199, 228-233 (GYGDVG), Glu-251, Asn-300, 321-323 (IGH), and Asn-375 each bind NAD(+).

The protein belongs to the adenosylhomocysteinase family. Requires NAD(+) as cofactor.

Its subcellular location is the cytoplasm. It carries out the reaction S-adenosyl-L-homocysteine + H2O = L-homocysteine + adenosine. It participates in amino-acid biosynthesis; L-homocysteine biosynthesis; L-homocysteine from S-adenosyl-L-homocysteine: step 1/1. Its function is as follows. May play a key role in the regulation of the intracellular concentration of adenosylhomocysteine. The chain is Adenosylhomocysteinase from Pseudomonas putida (strain W619).